Here is a 296-residue protein sequence, read N- to C-terminus: Tubulin polyglutamylase complex subunit 2 (296 aa).

Over residues Ser-254–Gly-265 the composition is skewed to basic residues. The interval Ser-254–Lys-296 is disordered. Low complexity predominate over residues Lys-285 to Lys-296.

In terms of assembly, part of the neuronal tubulin polyglutamylase complex which contains TPGS1, TPGS2, TTLL1, LRRC49 and NICN1. Interacts with CSTPP1 and LRRC49.

Its subcellular location is the cytoplasm. The protein resides in the cytoskeleton. It is found in the microtubule organizing center. It localises to the centrosome. The protein localises to the centriolar satellite. Its function is as follows. Subunit of the tubulin polyglutamylase complex (TPGC). The complex mediates cilia and flagella polyglutamylation which is essential for their biogenesis and motility. The polypeptide is Tubulin polyglutamylase complex subunit 2 (Tpgs2) (Mus musculus (Mouse)).